Here is an 89-residue protein sequence, read N- to C-terminus: Small ribosomal subunit protein uS15 (89 aa).

Belongs to the universal ribosomal protein uS15 family. In terms of assembly, part of the 30S ribosomal subunit. Forms a bridge to the 50S subunit in the 70S ribosome, contacting the 23S rRNA.

Its function is as follows. One of the primary rRNA binding proteins, it binds directly to 16S rRNA where it helps nucleate assembly of the platform of the 30S subunit by binding and bridging several RNA helices of the 16S rRNA. Forms an intersubunit bridge (bridge B4) with the 23S rRNA of the 50S subunit in the ribosome. The polypeptide is Small ribosomal subunit protein uS15 (Blochmanniella pennsylvanica (strain BPEN)).